A 406-amino-acid chain; its full sequence is Linalool 8-monooxygenase (406 aa).

Residue Cys-355 participates in heme binding.

The protein belongs to the cytochrome P450 family. The cofactor is heme.

It carries out the reaction linalool + 2 reduced [NADPH--hemoprotein reductase] + 2 O2 = (6E)-8-oxolinalool + 2 oxidized [NADPH--hemoprotein reductase] + 3 H2O + 2 H(+). Its pathway is terpene metabolism; linalool degradation. Its function is as follows. Catalyzes the 8-methyl hydroxylation of linalool. The chain is Linalool 8-monooxygenase (linC) from Pseudomonas putida (Arthrobacter siderocapsulatus).